Reading from the N-terminus, the 421-residue chain is uncharacterized protein (421 aa).

CBS domains follow at residues 13 to 74 (MTKD…VRSL), 74 to 133 (LMYK…MKDT), 139 to 195 (MTRN…PKKK), and 217 to 274 (MNTP…KGAM).

This is an uncharacterized protein from Methanocaldococcus jannaschii (strain ATCC 43067 / DSM 2661 / JAL-1 / JCM 10045 / NBRC 100440) (Methanococcus jannaschii).